A 1089-amino-acid polypeptide reads, in one-letter code: Probable transport protein MmpL8 (1089 aa).

Positions 1–26 (MCDVLMQPVRTPRPSTNLRSKPLRPT) are disordered. Helical transmembrane passes span 44–64 (WVVIAFWVALAGLLAPTVPSL), 222–242 (ITILLLVILLIIYRNPITMVL), 257–277 (LVAIAGLAGLGIANQSIIFMS), 316–336 (IGKVIAASAATVAITFLGMVF), 349–369 (LGISVAVVFFAAVTLLPALMV), 400–420 (KTHLLASALVLVILAGCAGLA), 555–575 (AISTVGGLIDALAYLQDLLGG), 874–894 (IIAMTVCIVLLILIVLLRAIV), 898–918 (YLIGSVIVSYLAALGIGVIVF), 930–950 (IPGLTFVILVAVGADYNMLLI), 973–993 (GGVITAAGLIMAASMYGLVFA), and 996–1016 (GSVVQGAFVLGTGLLLDTFLV). Positions 1056–1078 (RTKRKPLLPKEEEEQSPPDDDDL) are disordered. The span at 1066 to 1078 (EEEEQSPPDDDDL) shows a compositional bias: acidic residues.

The protein belongs to the resistance-nodulation-cell division (RND) (TC 2.A.6) family. MmpL subfamily.

It is found in the cell membrane. The polypeptide is Probable transport protein MmpL8 (mmpL8) (Mycobacterium bovis (strain ATCC BAA-935 / AF2122/97)).